We begin with the raw amino-acid sequence, 425 residues long: Sodium-dependent glucose transporter 1A (425 aa).

11 helical membrane passes run 35–55, 61–81, 84–104, 123–143, 183–203, 228–248, 271–291, 294–314, 320–340, 355–375, and 382–402; these read LIFV…GVLF, FFLL…IPFC, AVLL…VDTG, ALHF…KLAW, WAYA…FGLF, ALLC…ITYG, SIFW…ATFL, GTMI…LVLF, CLWI…PSGI, AFFV…IGIL, and LPVV…LFPV.

Belongs to the major facilitator superfamily.

The protein localises to the apical cell membrane. May function as a sodium-dependent glucose transporter. Potential channels for urea in the inner medulla of kidney. This is Sodium-dependent glucose transporter 1A from Mus musculus (Mouse).